The following is a 387-amino-acid chain: Lipid-A-disaccharide synthase (387 aa).

The protein belongs to the LpxB family.

The catalysed reaction is a lipid X + a UDP-2-N,3-O-bis[(3R)-3-hydroxyacyl]-alpha-D-glucosamine = a lipid A disaccharide + UDP + H(+). The protein operates within bacterial outer membrane biogenesis; LPS lipid A biosynthesis. Functionally, condensation of UDP-2,3-diacylglucosamine and 2,3-diacylglucosamine-1-phosphate to form lipid A disaccharide, a precursor of lipid A, a phosphorylated glycolipid that anchors the lipopolysaccharide to the outer membrane of the cell. This Nitrosococcus oceani (strain ATCC 19707 / BCRC 17464 / JCM 30415 / NCIMB 11848 / C-107) protein is Lipid-A-disaccharide synthase.